The following is a 78-amino-acid chain: Spermatid-specific protein T1 (78 aa).

The tract at residues M1–G21 is hydrophobic. The interval M1–R78 is disordered. Residues G20–R78 are compositionally biased toward basic residues.

Phosphorylation occurs at different degrees. The triphosphorylated form may be predominant in T1. SP1 appears to be phosphorylated in elongated spermatids, but dephosphorylated in mature sperm cells. Testis.

Its subcellular location is the nucleus. The protein resides in the chromosome. Cuttlefish spermiogenesis is characterized by a double nuclear protein transition: histones -&gt; spermatid-specific proteins (T1/T2) -&gt; protamines (SP1/SP2). The protamines compact sperm DNA into a highly condensed, stable and inactive complex. The chain is Spermatid-specific protein T1 from Sepia officinalis (Common cuttlefish).